We begin with the raw amino-acid sequence, 71 residues long: Pro-MCH (71 aa).

The first 20 residues, 1 to 20, serve as a signal peptide directing secretion; the sequence is AKMNLSSYILILTFSLFSQG.

This sequence belongs to the melanin-concentrating hormone family.

It localises to the secreted. This chain is Pro-MCH (PMCH), found in Hylobates lar (Lar gibbon).